A 136-amino-acid chain; its full sequence is Nucleoside diphosphate kinase (136 aa).

6 residues coordinate ATP: Lys10, Phe58, Arg86, Thr92, Arg104, and Asn114. The active-site Pros-phosphohistidine intermediate is His117.

The protein belongs to the NDK family. In terms of assembly, homotetramer. The cofactor is Mg(2+).

The protein resides in the cytoplasm. The enzyme catalyses a 2'-deoxyribonucleoside 5'-diphosphate + ATP = a 2'-deoxyribonucleoside 5'-triphosphate + ADP. It carries out the reaction a ribonucleoside 5'-diphosphate + ATP = a ribonucleoside 5'-triphosphate + ADP. In terms of biological role, major role in the synthesis of nucleoside triphosphates other than ATP. The ATP gamma phosphate is transferred to the NDP beta phosphate via a ping-pong mechanism, using a phosphorylated active-site intermediate. The chain is Nucleoside diphosphate kinase from Mycolicibacterium gilvum (strain PYR-GCK) (Mycobacterium gilvum (strain PYR-GCK)).